The following is a 140-amino-acid chain: Sex-regulated protein janus-B (140 aa).

Residue Arg-42 participates in substrate binding. Residue His-69 is the Proton acceptor of the active site. A substrate-binding site is contributed by 110–112 (SRT).

This sequence belongs to the janus family.

Its function is as follows. JanA and janB regulate somatic sex differentiation. The polypeptide is Sex-regulated protein janus-B (janB) (Drosophila teissieri (Fruit fly)).